The sequence spans 179 residues: Inosine/xanthosine triphosphatase (179 aa).

Position 71 (Glu-71) interacts with Mg(2+). 71–72 (EA) lines the substrate pocket.

This sequence belongs to the YjjX NTPase family. In terms of assembly, homodimer. Requires Mg(2+) as cofactor. The cofactor is Mn(2+).

The enzyme catalyses XTP + H2O = XDP + phosphate + H(+). The catalysed reaction is ITP + H2O = IDP + phosphate + H(+). Its function is as follows. Phosphatase that hydrolyzes non-canonical purine nucleotides such as XTP and ITP to their respective diphosphate derivatives. Probably excludes non-canonical purines from DNA/RNA precursor pool, thus preventing their incorporation into DNA/RNA and avoiding chromosomal lesions. The sequence is that of Inosine/xanthosine triphosphatase from Shewanella oneidensis (strain ATCC 700550 / JCM 31522 / CIP 106686 / LMG 19005 / NCIMB 14063 / MR-1).